The chain runs to 238 residues: Ribonuclease PH (238 aa).

Residues R86 and 124 to 126 contribute to the phosphate site; that span reads GTR.

It belongs to the RNase PH family. In terms of assembly, homohexameric ring arranged as a trimer of dimers.

The catalysed reaction is tRNA(n+1) + phosphate = tRNA(n) + a ribonucleoside 5'-diphosphate. Its function is as follows. Phosphorolytic 3'-5' exoribonuclease that plays an important role in tRNA 3'-end maturation. Removes nucleotide residues following the 3'-CCA terminus of tRNAs; can also add nucleotides to the ends of RNA molecules by using nucleoside diphosphates as substrates, but this may not be physiologically important. Probably plays a role in initiation of 16S rRNA degradation (leading to ribosome degradation) during starvation. In Trichlorobacter lovleyi (strain ATCC BAA-1151 / DSM 17278 / SZ) (Geobacter lovleyi), this protein is Ribonuclease PH.